The chain runs to 604 residues: Beta-alanine transporter (604 aa).

The Cytoplasmic segment spans residues 1-23; that stretch reads MDFDEVLREVGSFGLYQKVIICS. A helical transmembrane segment spans residues 24–44; sequence VLLPAALPCAFHAYSQLFIAA. Residues 45–151 are Extracellular-facing; the sequence is TPQHFCRVPE…QEWNLVCDRS (107 aa). N-linked (GlcNAc...) asparagine glycosylation is found at Asn68 and Asn88. A helical membrane pass occupies residues 152 to 172; the sequence is FLVTLALVVFGVGGLLGNYVF. At 173-182 the chain is on the cytoplasmic side; the sequence is GYLVDLWGRR. A helical transmembrane segment spans residues 183-203; sequence PSFYAYLLLEIIACAASAFAW. Residues 204 to 212 are Extracellular-facing; it reads NYYTWLGLR. The helical transmembrane segment at 213–233 threads the bilayer; sequence FVVGLTVPAILASPYVLAIEL. At 234 to 243 the chain is on the cytoplasmic side; that stretch reads VGPERRVFCT. A helical membrane pass occupies residues 244 to 264; that stretch reads IVSNIAYSLGLVVLAGVIYIV. Over 265–268 the chain is Extracellular; that stretch reads RDWR. Residues 269-289 form a helical membrane-spanning segment; it reads ELSLAVSMPLLMLFSCFFVLP. Topologically, residues 290–362 are cytoplasmic; the sequence is ESPRWLMAVG…FRGPNMRRKT (73 aa). Residues 363–383 traverse the membrane as a helical segment; that stretch reads LIITLIWFANTSVYVGLSYYA. Over 384-390 the chain is Extracellular; that stretch reads PALGGDE. A helical transmembrane segment spans residues 391-411; that stretch reads IWNFFLAGAVELPTYLLLWPG. Topologically, residues 412–418 are cytoplasmic; it reads LSYFGRR. Residues 419–439 traverse the membrane as a helical segment; sequence WILFISMLVGGVACVATFLYP. Topologically, residues 440-442 are extracellular; that stretch reads DIT. The chain crosses the membrane as a helical span at residues 443 to 463; sequence LLLYCVGKMGISSSFVVLPLM. Topologically, residues 464-473 are cytoplasmic; it reads ASELYPTVVR. The helical transmembrane segment at 474–494 threads the bilayer; the sequence is GLGMSFSSVISMVGPIVIPMI. The Extracellular segment spans residues 495 to 501; it reads NHMGQQM. A helical membrane pass occupies residues 502–522; the sequence is LVLPLIVMGALLILGGFASLL. Over 523-604 the chain is Cytoplasmic; that stretch reads LPETRNRNLP…SICKNEMRTL (82 aa).

This sequence belongs to the major facilitator (TC 2.A.1) superfamily. Organic cation transporter (TC 2.A.1.19) family. As to expression, expressed in the head and predominantly in the retinal pigment cells of the compound eye.

The protein localises to the cell membrane. In terms of biological role, beta-alanine transporter required for the uptake of beta-alanine by the glia. Required for the recycling process of the neurotransmitter histamine in photoreceptor neurons of the compound eye and therefore for photoreceptor synaptic transmission. Following histamine release from photoreceptors and its uptake by glia, histamine is conjugated to beta-alanine by e/Ebony to form the inactive metabolite, carcinine. The protein is Beta-alanine transporter of Drosophila melanogaster (Fruit fly).